The sequence spans 503 residues: Ent-kaurene oxidase-like 5 (503 aa).

Residues 8–28 (GAGGIGVAAAAAVVAATLAVV) traverse the membrane as a helical segment. Cys-448 is a heme binding site.

The protein belongs to the cytochrome P450 family. It depends on heme as a cofactor. In terms of tissue distribution, expressed in roots.

It localises to the membrane. May hydroxylate diterpenes. This Oryza sativa subsp. japonica (Rice) protein is Ent-kaurene oxidase-like 5.